The sequence spans 92 residues: Acylphosphatase (92 aa).

Residues 5–90 form the Acylphosphatase-like domain; that stretch reads TYRLVICGLV…GDFVGFQLRE (86 aa). Active-site residues include Arg20 and Asn38.

It belongs to the acylphosphatase family.

The enzyme catalyses an acyl phosphate + H2O = a carboxylate + phosphate + H(+). The chain is Acylphosphatase (acyP) from Albidiferax ferrireducens (strain ATCC BAA-621 / DSM 15236 / T118) (Rhodoferax ferrireducens).